The primary structure comprises 554 residues: 3-(3-hydroxy-phenyl)propionate/3-hydroxycinnamic acid hydroxylase (554 aa).

Residues 17–46 and 285–295 each bind FAD; these read QVAI…VVEK and FRIDRVLLAGD.

The protein belongs to the PheA/TfdB FAD monooxygenase family. Requires FAD as cofactor.

It catalyses the reaction 3-(3-hydroxyphenyl)propanoate + NADH + O2 + H(+) = 3-(2,3-dihydroxyphenyl)propanoate + NAD(+) + H2O. The enzyme catalyses (2E)-3-(3-hydroxyphenyl)prop-2-enoate + NADH + O2 + H(+) = (2E)-3-(2,3-dihydroxyphenyl)prop-2-enoate + NAD(+) + H2O. It participates in aromatic compound metabolism; 3-phenylpropanoate degradation. Catalyzes the insertion of one atom of molecular oxygen into position 2 of the phenyl ring of 3-(3-hydroxyphenyl)propionate (3-HPP) and hydroxycinnamic acid (3HCI). This is 3-(3-hydroxy-phenyl)propionate/3-hydroxycinnamic acid hydroxylase from Shigella sonnei (strain Ss046).